Here is a 225-residue protein sequence, read N- to C-terminus: MNSIEFPLLDRTTQNSVISTTSNDLSNWSRLSSLWPLLYGTSCCFIEFASLIGSRFDFDRYGLVPRSSPRQADLILTAGTVTMKMAPSLVRLYEQMPEPKYVIAMGACTISGGMFSTDSYSTVRGVDKLIPVDVYLPGCPPKPEAVIDAITKLRKKISREIYEDRIKSQRENRCFTTNHKLKVGRSIHTGNYDREFLYQPTSTSEIPPETFFKYKSSVSSHELVN.

[4Fe-4S] cluster is bound by residues Cys-43, Cys-44, Cys-108, and Cys-139.

The protein belongs to the complex I 20 kDa subunit family. In terms of assembly, NDH is composed of at least 16 different subunits, 5 of which are encoded in the nucleus. It depends on [4Fe-4S] cluster as a cofactor.

It localises to the plastid. The protein localises to the chloroplast thylakoid membrane. It carries out the reaction a plastoquinone + NADH + (n+1) H(+)(in) = a plastoquinol + NAD(+) + n H(+)(out). The enzyme catalyses a plastoquinone + NADPH + (n+1) H(+)(in) = a plastoquinol + NADP(+) + n H(+)(out). NDH shuttles electrons from NAD(P)H:plastoquinone, via FMN and iron-sulfur (Fe-S) centers, to quinones in the photosynthetic chain and possibly in a chloroplast respiratory chain. The immediate electron acceptor for the enzyme in this species is believed to be plastoquinone. Couples the redox reaction to proton translocation, and thus conserves the redox energy in a proton gradient. The protein is NAD(P)H-quinone oxidoreductase subunit K, chloroplastic of Daucus carota (Wild carrot).